The primary structure comprises 249 residues: Phosphoribosylaminoimidazole-succinocarboxamide synthase (249 aa).

It belongs to the SAICAR synthetase family.

It carries out the reaction 5-amino-1-(5-phospho-D-ribosyl)imidazole-4-carboxylate + L-aspartate + ATP = (2S)-2-[5-amino-1-(5-phospho-beta-D-ribosyl)imidazole-4-carboxamido]succinate + ADP + phosphate + 2 H(+). It functions in the pathway purine metabolism; IMP biosynthesis via de novo pathway; 5-amino-1-(5-phospho-D-ribosyl)imidazole-4-carboxamide from 5-amino-1-(5-phospho-D-ribosyl)imidazole-4-carboxylate: step 1/2. This chain is Phosphoribosylaminoimidazole-succinocarboxamide synthase, found in Roseiflexus castenholzii (strain DSM 13941 / HLO8).